A 420-amino-acid polypeptide reads, in one-letter code: Glucose-1-phosphate adenylyltransferase (420 aa).

Residues Tyr107, Gly172, 187–188 (EK), and Ser205 contribute to the alpha-D-glucose 1-phosphate site.

This sequence belongs to the bacterial/plant glucose-1-phosphate adenylyltransferase family. In terms of assembly, homotetramer.

It carries out the reaction alpha-D-glucose 1-phosphate + ATP + H(+) = ADP-alpha-D-glucose + diphosphate. Its pathway is glycan biosynthesis; glycogen biosynthesis. Involved in the biosynthesis of ADP-glucose, a building block required for the elongation reactions to produce glycogen. Catalyzes the reaction between ATP and alpha-D-glucose 1-phosphate (G1P) to produce pyrophosphate and ADP-Glc. This Sinorhizobium fredii (strain NBRC 101917 / NGR234) protein is Glucose-1-phosphate adenylyltransferase.